The following is a 179-amino-acid chain: MTDLVAVWDVALSDGVHKIEFEHGTTSGKRVVYVDGKEEIRKEWMFKLVGKETFYVGAAKTKATINIDAISGFAYEYTLEINGKSLKKYMEDRSKTTNTWVLHMDGENFRIVLEKDAMDVWCNGKKLETAGEFVDDGTETHFSIGNHDCYIKAVSSGKRKEGIIHTLIVDNREIPEIAS.

At Thr2 the chain carries N-acetylthreonine.

Belongs to the FAIM1 family.

It localises to the cytoplasm. Its function is as follows. Plays a role as an inducible effector molecule that mediates Fas resistance produced by surface Ig engagement in B cells. This is Fas apoptotic inhibitory molecule 1 (FAIM) from Homo sapiens (Human).